A 327-amino-acid chain; its full sequence is Phosphate acyltransferase (327 aa).

It belongs to the PlsX family. Homodimer. Probably interacts with PlsY.

The protein localises to the cytoplasm. The catalysed reaction is a fatty acyl-[ACP] + phosphate = an acyl phosphate + holo-[ACP]. Its pathway is lipid metabolism; phospholipid metabolism. In terms of biological role, catalyzes the reversible formation of acyl-phosphate (acyl-PO(4)) from acyl-[acyl-carrier-protein] (acyl-ACP). This enzyme utilizes acyl-ACP as fatty acyl donor, but not acyl-CoA. In Mycoplasma mobile (strain ATCC 43663 / 163K / NCTC 11711) (Mesomycoplasma mobile), this protein is Phosphate acyltransferase.